The primary structure comprises 212 residues: MAVVSVEELVVDPPTAARRLLGATLRSGQVAVRLVEVEAYGGDAEGPWPDPASHSGRGRTKRNAVMFGPAGYLYVYLSYGMHTCVNVTTGPDGTAGAVLLRAGEVVDGLDVVRGRRPTARTDADLARGPGNFGTALGIALDDYGTALFDPAAPIRLELADPLPAALIADGPRVGVSSEADRPWRFWLPSSPAVSAYRRSPRAPGAATVRAPR.

This sequence belongs to the DNA glycosylase MPG family.

The protein is Putative 3-methyladenine DNA glycosylase of Nocardia farcinica (strain IFM 10152).